Consider the following 302-residue polypeptide: tRNA pseudouridine synthase B (302 aa).

The Nucleophile role is filled by D47.

The protein belongs to the pseudouridine synthase TruB family. Type 1 subfamily.

It carries out the reaction uridine(55) in tRNA = pseudouridine(55) in tRNA. In terms of biological role, responsible for synthesis of pseudouridine from uracil-55 in the psi GC loop of transfer RNAs. This is tRNA pseudouridine synthase B from Methylobacillus flagellatus (strain ATCC 51484 / DSM 6875 / VKM B-1610 / KT).